A 507-amino-acid chain; its full sequence is Aromatase (507 aa).

Residue C436 participates in heme binding.

Belongs to the cytochrome P450 family. Requires heme as cofactor.

The protein localises to the membrane. It catalyses the reaction testosterone + 3 reduced [NADPH--hemoprotein reductase] + 3 O2 = 17beta-estradiol + formate + 3 oxidized [NADPH--hemoprotein reductase] + 4 H2O + 4 H(+). The catalysed reaction is androst-4-ene-3,17-dione + 3 reduced [NADPH--hemoprotein reductase] + 3 O2 = estrone + formate + 3 oxidized [NADPH--hemoprotein reductase] + 4 H2O + 4 H(+). Functionally, catalyzes the formation of aromatic C18 estrogens from C19 androgens. The sequence is that of Aromatase (CYP19A1) from Gallus gallus (Chicken).